A 247-amino-acid polypeptide reads, in one-letter code: Cell division protein ZapD (247 aa).

The protein belongs to the ZapD family. As to quaternary structure, interacts with FtsZ.

It localises to the cytoplasm. Its function is as follows. Cell division factor that enhances FtsZ-ring assembly. Directly interacts with FtsZ and promotes bundling of FtsZ protofilaments, with a reduction in FtsZ GTPase activity. This is Cell division protein ZapD from Escherichia coli O7:K1 (strain IAI39 / ExPEC).